A 337-amino-acid polypeptide reads, in one-letter code: Ornithine carbamoyltransferase, catabolic (337 aa).

Carbamoyl phosphate contacts are provided by residues 58–61 (STRT), Q85, R109, and 135–138 (HPTQ). Residues N167, D231, and 235-236 (SM) contribute to the L-ornithine site. Residues 272–273 (CL) and R317 contribute to the carbamoyl phosphate site.

Belongs to the aspartate/ornithine carbamoyltransferase superfamily. OTCase family.

It is found in the cytoplasm. The enzyme catalyses carbamoyl phosphate + L-ornithine = L-citrulline + phosphate + H(+). It participates in amino-acid degradation; L-arginine degradation via ADI pathway; carbamoyl phosphate from L-arginine: step 2/2. Functionally, reversibly catalyzes the transfer of the carbamoyl group from carbamoyl phosphate (CP) to the N(epsilon) atom of ornithine (ORN) to produce L-citrulline. The protein is Ornithine carbamoyltransferase, catabolic (arcB) of Latilactobacillus sakei (Lactobacillus sakei).